We begin with the raw amino-acid sequence, 120 residues long: NAD(P)H-quinone oxidoreductase subunit 3, chloroplastic (120 aa).

A run of 3 helical transmembrane segments spans residues 9 to 29 (IFWAFLIISSLIPILAFLISG), 64 to 84 (MFALIFVVFDVETVFLYPWAM), and 88 to 108 (VLGVSVFLEAFLFVLILIVGS).

Belongs to the complex I subunit 3 family. NDH is composed of at least 16 different subunits, 5 of which are encoded in the nucleus.

The protein resides in the plastid. It is found in the chloroplast thylakoid membrane. The catalysed reaction is a plastoquinone + NADH + (n+1) H(+)(in) = a plastoquinol + NAD(+) + n H(+)(out). The enzyme catalyses a plastoquinone + NADPH + (n+1) H(+)(in) = a plastoquinol + NADP(+) + n H(+)(out). NDH shuttles electrons from NAD(P)H:plastoquinone, via FMN and iron-sulfur (Fe-S) centers, to quinones in the photosynthetic chain and possibly in a chloroplast respiratory chain. The immediate electron acceptor for the enzyme in this species is believed to be plastoquinone. Couples the redox reaction to proton translocation, and thus conserves the redox energy in a proton gradient. The sequence is that of NAD(P)H-quinone oxidoreductase subunit 3, chloroplastic from Phaseolus vulgaris (Kidney bean).